A 588-amino-acid chain; its full sequence is Phosphoinositide phosphatase SAC8 (588 aa).

Positions 37-56 (FSVNRRDGNIKPLDENASSG) are disordered. Basic and acidic residues predominate over residues 40-50 (NRRDGNIKPLD). In terms of domain architecture, SAC spans 129–455 (LQALETTPGL…GDEVSLQYAG (327 aa)). A Phosphatase catalytic core motif is present at residues 390–401 (RSNCIDCLDRTN). Helical transmembrane passes span 524 to 544 (SFLP…SFTI) and 555 to 575 (LASA…KANG).

As to expression, ubiquitous with a higher level of expression in young seedlings than in other tissues.

It is found in the endoplasmic reticulum membrane. Phosphoinositide phosphatase that hydrolyzes PtdIns(3)P and PtdIns(4)P. This chain is Phosphoinositide phosphatase SAC8 (SAC8), found in Arabidopsis thaliana (Mouse-ear cress).